The chain runs to 109 residues: NADH-quinone oxidoreductase subunit K (109 aa).

The next 3 membrane-spanning stretches (helical) occupy residues 12-32 (LNHY…GLFM), 40-60 (ILMS…AFSV), and 72-92 (IIIL…LLIY).

Belongs to the complex I subunit 4L family. As to quaternary structure, NDH-1 is composed of 14 different subunits. Subunits NuoA, H, J, K, L, M, N constitute the membrane sector of the complex.

Its subcellular location is the cell inner membrane. It carries out the reaction a quinone + NADH + 5 H(+)(in) = a quinol + NAD(+) + 4 H(+)(out). NDH-1 shuttles electrons from NADH, via FMN and iron-sulfur (Fe-S) centers, to quinones in the respiratory chain. The immediate electron acceptor for the enzyme in this species is believed to be ubiquinone. Couples the redox reaction to proton translocation (for every two electrons transferred, four hydrogen ions are translocated across the cytoplasmic membrane), and thus conserves the redox energy in a proton gradient. The chain is NADH-quinone oxidoreductase subunit K from Rickettsia bellii (strain RML369-C).